A 371-amino-acid polypeptide reads, in one-letter code: Fructose-1,6-bisphosphatase class 1 1 (371 aa).

4 residues coordinate Mg(2+): Glu115, Asp134, Leu136, and Asp137. Residues 137–140 (DGSS), Asn228, and 280–282 (YLY) each bind substrate. Residue Glu300 coordinates Mg(2+).

This sequence belongs to the FBPase class 1 family. Homotetramer. Mg(2+) serves as cofactor.

Its subcellular location is the cytoplasm. The enzyme catalyses beta-D-fructose 1,6-bisphosphate + H2O = beta-D-fructose 6-phosphate + phosphate. Its pathway is carbohydrate biosynthesis; gluconeogenesis. The chain is Fructose-1,6-bisphosphatase class 1 1 from Xanthobacter autotrophicus (strain ATCC BAA-1158 / Py2).